The following is a 404-amino-acid chain: Probable pectate lyase 18 (404 aa).

The first 20 residues, 1–20 (MSTLFFTFSLLLLAPLLVIS), serve as a signal peptide directing secretion. N37 carries an N-linked (GlcNAc...) asparagine glycan. Cysteines 159 and 178 form a disulfide. Residue N191 is glycosylated (N-linked (GlcNAc...) asparagine). 4 residues coordinate Ca(2+): D200, D202, D224, and D228. R280 is an active-site residue.

Belongs to the polysaccharide lyase 1 family. It depends on Ca(2+) as a cofactor. As to expression, predominantly found in the pistil where it is found in the outer five layers of the strands of transmitting tissue within the upper two-thirds of the style. Found at much lower levels in the anthers and vegetative organs.

It is found in the secreted. The catalysed reaction is Eliminative cleavage of (1-&gt;4)-alpha-D-galacturonan to give oligosaccharides with 4-deoxy-alpha-D-galact-4-enuronosyl groups at their non-reducing ends.. It functions in the pathway glycan metabolism; pectin degradation; 2-dehydro-3-deoxy-D-gluconate from pectin: step 2/5. In terms of biological role, may have a role in the development of the transmitting tissue of the style and/or in the events related to pollination such as some aspect in the facilitation of compatible pollen tube growth. The chain is Probable pectate lyase 18 from Solanum lycopersicum (Tomato).